Consider the following 353-residue polypeptide: Probable arabinan endo-1,5-alpha-L-arabinosidase B (353 aa).

An N-terminal signal peptide occupies residues 1–16 (MVLVATLFSLFTVSLC). Residue aspartate 39 is the Proton acceptor of the active site. Asparagine 194 carries an N-linked (GlcNAc...) asparagine glycan. The interval 202-227 (HLAKHPKTERVNSQDQNPDPLCRDSS) is disordered. The active-site Proton donor is the glutamate 233.

It belongs to the glycosyl hydrolase 43 family.

It localises to the secreted. It catalyses the reaction Endohydrolysis of (1-&gt;5)-alpha-arabinofuranosidic linkages in (1-&gt;5)-arabinans.. Its pathway is glycan metabolism; L-arabinan degradation. Functionally, endo-1,5-alpha-L-arabinanase involved in degradation of pectin. Its preferred substrate is linear 1,5-alpha-L-arabinan. The chain is Probable arabinan endo-1,5-alpha-L-arabinosidase B (abnB) from Aspergillus oryzae (strain ATCC 42149 / RIB 40) (Yellow koji mold).